The sequence spans 569 residues: MGSTLGCHRSIPRDPSDLSHSRKFSAACNFSNILVNQERLNINTATEEELMTLPGVTRAVARSIVEYREYIGGFKKVEDLALVSGVGATKLEQVKFEICVSSKGNSAQHSPSSLRRDLLAEQQPHHLATTVPLTPRVNINTATLAQLMSVRGLSEKMAVSIVDYRREHGPFRSVEDLVRMDGINAAFLDRIRHQVFAERSRPPSTHTNGGLTFTAKPHPSPTSLSLQSEDLDLPPGGPTQIISMRPSVEAFGGMRDGRPVFRLATWNLQGCSVEKANNPGVREVVCMTLLENSIKLLAVQELLDKEALEKFCTELNQPILPNIRKWKGPRGCWRSIVAEKPSSQLQKGPCYSGFLWDTAANVELRDIPGQESSPSNGHAKTVGPSPFLARFKVGSNDLTLVNLQLTALALPGVENSSKNHSDGHRLLNFALTLQETLKGEKDVVILGDFGQGPDSSDYDILRREKFHHLIPAHTFTNISTRNPQGSKSVDNIWISKSLKKVFTGHWAVVREGLTNPWIPDNWSWGGVASEHCPVLAELYMEKDWSKKEVPRNGNGVTLEPSEANVKHER.

The interval 1 to 20 (MGSTLGCHRSIPRDPSDLSH) is disordered. A lipid anchor (N-myristoyl glycine) is attached at Gly2. Over residues 11–20 (IPRDPSDLSH) the composition is skewed to basic and acidic residues. A phosphoserine mark is found at Ser16, Ser21, and Ser25. Residues 38-67 (ERLNINTATEEELMTLPGVTRAVARSIVEY) form the HhH domain. A phosphoserine mark is found at Ser106, Ser110, Ser160, and Ser173. Residues 200–224 (SRPPSTHTNGGLTFTAKPHPSPTSL) are disordered. Residues 202–211 (PPSTHTNGGL) show a composition bias toward polar residues. A Phosphothreonine modification is found at Thr265. A disordered region spans residues 548–569 (EVPRNGNGVTLEPSEANVKHER).

This Rattus norvegicus (Rat) protein is Endonuclease/exonuclease/phosphatase family domain-containing protein 1 (Eepd1).